The primary structure comprises 408 residues: BRCA1-A complex subunit Abraxas 1 (408 aa).

One can recognise an MPN domain in the interval 7 to 155 (TAVISGFVFG…KSTHRLEYAL (149 aa)). The stretch at 210 to 272 (ALAEVNRISD…MEEKGNKVSE (63 aa)) forms a coiled coil. A disordered region spans residues 335–408 (HRRQAGKRKA…EVSRSKSPTF (74 aa)). The span at 337 to 358 (RQAGKRKAHSKQLGKTSTKKSR) shows a compositional bias: basic residues. A compositionally biased stretch (polar residues) spans 394–408 (QSLNVEVSRSKSPTF). At Ser-405 the chain carries Phosphoserine. The pSXXF motif signature appears at 405–408 (SPTF).

Belongs to the FAM175 family. Abraxas subfamily. Component of the BRCA1-A complex. Component of the BRISC complex. Homodimer. Interacts directly (when phosphorylated at Ser-405) with brca1. The phosphorylated homodimer can interact directly with two brca1 chains, giving rise to a heterotetramer. Phosphorylation of Ser-405 of the pSXXF motif by ATM or ATR constitutes a specific recognition motif for the BRCT domain of BRCA1.

The protein localises to the nucleus. Involved in DNA damage response and double-strand break (DSB) repair. Component of the BRCA1-A complex, acting as a central scaffold protein that assembles the various components of the complex and mediates the recruitment of brca1. The BRCA1-A complex specifically recognizes 'Lys-63'-linked ubiquitinated histones H2A and H2AX at DNA lesion sites, leading to target the brca1-bard1 heterodimer to sites of DNA damage at DSBs. This complex also possesses deubiquitinase activity that specifically removes 'Lys-63'-linked ubiquitin on histones H2A and H2AX. The chain is BRCA1-A complex subunit Abraxas 1 from Xenopus laevis (African clawed frog).